A 458-amino-acid polypeptide reads, in one-letter code: Cysteine--tRNA ligase (458 aa).

Cys29 is a binding site for Zn(2+). Residues 31-41 (PTVYDNPHIGN) carry the 'HIGH' region motif. The Zn(2+) site is built by Cys214, His239, and Glu243. Positions 272–276 (KMSKS) match the 'KMSKS' region motif. An ATP-binding site is contributed by Lys275.

Belongs to the class-I aminoacyl-tRNA synthetase family. Monomer. It depends on Zn(2+) as a cofactor.

It localises to the cytoplasm. The catalysed reaction is tRNA(Cys) + L-cysteine + ATP = L-cysteinyl-tRNA(Cys) + AMP + diphosphate. The protein is Cysteine--tRNA ligase of Rickettsia bellii (strain OSU 85-389).